The following is a 419-amino-acid chain: UDP-N-acetylglucosamine 1-carboxyvinyltransferase (419 aa).

Phosphoenolpyruvate is bound at residue 22–23 (KN). Arg-92 contacts UDP-N-acetyl-alpha-D-glucosamine. The active-site Proton donor is Cys-116. Residue Cys-116 is modified to 2-(S-cysteinyl)pyruvic acid O-phosphothioketal. UDP-N-acetyl-alpha-D-glucosamine is bound by residues Asp-306 and Ile-328.

This sequence belongs to the EPSP synthase family. MurA subfamily.

It localises to the cytoplasm. It carries out the reaction phosphoenolpyruvate + UDP-N-acetyl-alpha-D-glucosamine = UDP-N-acetyl-3-O-(1-carboxyvinyl)-alpha-D-glucosamine + phosphate. It participates in cell wall biogenesis; peptidoglycan biosynthesis. Its function is as follows. Cell wall formation. Adds enolpyruvyl to UDP-N-acetylglucosamine. This chain is UDP-N-acetylglucosamine 1-carboxyvinyltransferase, found in Psychromonas ingrahamii (strain DSM 17664 / CCUG 51855 / 37).